The following is a 280-amino-acid chain: Pantothenate synthetase (280 aa).

30–37 (MGALHRGH) serves as a coordination point for ATP. His-37 serves as the catalytic Proton donor. Residue Gln-61 participates in (R)-pantoate binding. Gln-61 is a binding site for beta-alanine. 148 to 151 (GEKD) serves as a coordination point for ATP. (R)-pantoate is bound at residue Gln-154. Residues Val-177 and 185-188 (LSSR) contribute to the ATP site.

This sequence belongs to the pantothenate synthetase family. In terms of assembly, homodimer.

Its subcellular location is the cytoplasm. The enzyme catalyses (R)-pantoate + beta-alanine + ATP = (R)-pantothenate + AMP + diphosphate + H(+). It participates in cofactor biosynthesis; (R)-pantothenate biosynthesis; (R)-pantothenate from (R)-pantoate and beta-alanine: step 1/1. Catalyzes the condensation of pantoate with beta-alanine in an ATP-dependent reaction via a pantoyl-adenylate intermediate. This Azobacteroides pseudotrichonymphae genomovar. CFP2 protein is Pantothenate synthetase.